The following is a 281-amino-acid chain: Transcription factor bHLH79 (281 aa).

The interval 47–167 (FTRSEHSGNK…GQATDRHSLA (121 aa)) is disordered. Basic and acidic residues-rich tracts occupy residues 77 to 88 (KTRDLNSEDDSS) and 138 to 152 (TEQK…DYIH). One can recognise a bHLH domain in the interval 159-209 (QATDRHSLAERARREKISEKMTALQDIIPGCNKIIGKALVLDEIINYIQSL).

In terms of assembly, homodimer.

It localises to the nucleus. This chain is Transcription factor bHLH79 (BHLH79), found in Arabidopsis thaliana (Mouse-ear cress).